The sequence spans 721 residues: Polyribonucleotide nucleotidyltransferase (721 aa).

Aspartate 495 and aspartate 501 together coordinate Mg(2+). One can recognise a KH domain in the interval 562-621 (PRLLSFRIDPELIGTVIGPGGRTIKGITERTNTKIDIEDGGIVTIASHDGAAAEEAQKII). The S1 motif domain occupies 631–699 (GEIFPGVVTR…SRGRINLTLR (69 aa)).

It belongs to the polyribonucleotide nucleotidyltransferase family. Requires Mg(2+) as cofactor.

It localises to the cytoplasm. It carries out the reaction RNA(n+1) + phosphate = RNA(n) + a ribonucleoside 5'-diphosphate. In terms of biological role, involved in mRNA degradation. Catalyzes the phosphorolysis of single-stranded polyribonucleotides processively in the 3'- to 5'-direction. The sequence is that of Polyribonucleotide nucleotidyltransferase from Prochlorococcus marinus subsp. pastoris (strain CCMP1986 / NIES-2087 / MED4).